Reading from the N-terminus, the 435-residue chain is Glutamyl-tRNA reductase (435 aa).

Residues 49–52, serine 109, 114–116, and glutamine 120 contribute to the substrate site; these read TCNR and ETQ. Residue cysteine 50 is the Nucleophile of the active site. An NADP(+)-binding site is contributed by 189–194; sequence GAGEMS.

This sequence belongs to the glutamyl-tRNA reductase family. As to quaternary structure, homodimer.

It catalyses the reaction (S)-4-amino-5-oxopentanoate + tRNA(Glu) + NADP(+) = L-glutamyl-tRNA(Glu) + NADPH + H(+). It functions in the pathway porphyrin-containing compound metabolism; protoporphyrin-IX biosynthesis; 5-aminolevulinate from L-glutamyl-tRNA(Glu): step 1/2. Its function is as follows. Catalyzes the NADPH-dependent reduction of glutamyl-tRNA(Glu) to glutamate 1-semialdehyde (GSA). In Listeria monocytogenes serotype 4b (strain F2365), this protein is Glutamyl-tRNA reductase.